The sequence spans 500 residues: Serine carboxypeptidase 3 (500 aa).

The N-terminal stretch at 1–21 (MATARVSLILLVVVLAASACA) is a signal peptide. The propeptide occupies 22-73 (EGLRLPRDAKFPAAQAERLIRSLNLLPKEAGPTGAGDVPSVAPGELLERRVT). 3 cysteine pairs are disulfide-bonded: C126/C366, C294/C309, and C332/C337. A glycan (N-linked (GlcNAc...) asparagine) is linked at N144. S216 is a catalytic residue. The active site involves D404. Residue C407 coordinates substrate. H461 is an active-site residue. A propeptide spanning residues 485–500 (EEWLAELPEQPMYAAM) is cleaved from the precursor.

It belongs to the peptidase S10 family. Monomer.

It carries out the reaction Release of a C-terminal amino acid with broad specificity.. The protein is Serine carboxypeptidase 3 (CBP3) of Oryza sativa subsp. japonica (Rice).